The sequence spans 293 residues: Ribosomal protein L11 methyltransferase (293 aa).

Residues Thr-145, Gly-166, Asp-188, and Asn-230 each coordinate S-adenosyl-L-methionine.

This sequence belongs to the methyltransferase superfamily. PrmA family.

The protein resides in the cytoplasm. It catalyses the reaction L-lysyl-[protein] + 3 S-adenosyl-L-methionine = N(6),N(6),N(6)-trimethyl-L-lysyl-[protein] + 3 S-adenosyl-L-homocysteine + 3 H(+). In terms of biological role, methylates ribosomal protein L11. This Yersinia pseudotuberculosis serotype I (strain IP32953) protein is Ribosomal protein L11 methyltransferase.